We begin with the raw amino-acid sequence, 135 residues long: M-zodatoxin-Lt8q (135 aa).

The first 20 residues, 1–20 (MKYFVVALALVAAFACIAES), serve as a signal peptide directing secretion. Residues 21 to 60 (KPAESEHELAEVEEENELADLEDAVWLEHLADLSDLEEAR) constitute a propeptide that is removed on maturation.

Belongs to the cationic peptide 06 (cytoinsectotoxin) family. As to expression, expressed by the venom gland.

The protein resides in the secreted. In terms of biological role, insecticidal, cytolytic and antimicrobial peptide. Forms voltage-dependent, ion-permeable channels in membranes. At high concentration causes cell membrane lysis. The sequence is that of M-zodatoxin-Lt8q (cit 1-16) from Lachesana tarabaevi (Spider).